The primary structure comprises 162 residues: Ubiquitin-fold modifier-conjugating enzyme 1 (162 aa).

Cys-115 (glycyl thioester intermediate) is an active-site residue.

The protein belongs to the ubiquitin-conjugating enzyme family. UFC1 subfamily. In terms of assembly, interacts with uba-5.

In terms of biological role, E2-like enzyme which forms an intermediate with ufm-1. The intermediate is formed via a thioester linkage. The polypeptide is Ubiquitin-fold modifier-conjugating enzyme 1 (Caenorhabditis briggsae).